A 113-amino-acid polypeptide reads, in one-letter code: Protein Wnt-10 (113 aa).

Residue S1 is the site of O-palmitoleoyl serine; by PORCN attachment. C79 and C94 are oxidised to a cystine.

Belongs to the Wnt family. Post-translationally, palmitoleoylation is required for efficient binding to frizzled receptors. Depalmitoleoylation leads to Wnt signaling pathway inhibition.

The protein resides in the secreted. Its subcellular location is the extracellular space. The protein localises to the extracellular matrix. In terms of biological role, ligand for members of the frizzled family of seven transmembrane receptors. Probable developmental protein. May be a signaling molecule which affects the development of discrete regions of tissues. Is likely to signal over only few cell diameters. In Eptatretus stoutii (Pacific hagfish), this protein is Protein Wnt-10 (WNT-10).